Consider the following 96-residue polypeptide: Large ribosomal subunit protein uL23 (96 aa).

It belongs to the universal ribosomal protein uL23 family. Part of the 50S ribosomal subunit. Contacts protein L29, and trigger factor when it is bound to the ribosome.

In terms of biological role, one of the early assembly proteins it binds 23S rRNA. One of the proteins that surrounds the polypeptide exit tunnel on the outside of the ribosome. Forms the main docking site for trigger factor binding to the ribosome. This Nitratidesulfovibrio vulgaris (strain DSM 19637 / Miyazaki F) (Desulfovibrio vulgaris) protein is Large ribosomal subunit protein uL23.